A 666-amino-acid polypeptide reads, in one-letter code: Calpain-10 (666 aa).

The 309-residue stretch at 13-321 folds into the Calpain catalytic domain; the sequence is LFRDAAFPAS…FDEVTIGYPV (309 aa). Residues C73, H238, and N263 contribute to the active site. Domain III stretches follow at residues 322–488 and 507–648; these read TEAG…ISLS and EWET…IHSQ.

It belongs to the peptidase C2 family.

Calcium-regulated non-lysosomal thiol-protease which catalyzes limited proteolysis of substrates involved in cytoskeletal remodeling and signal transduction. May play a role in insulin-stimulated glucose uptake. This is Calpain-10 (Capn10) from Mus musculus (Mouse).